A 418-amino-acid polypeptide reads, in one-letter code: rRNA methyltransferase 3, mitochondrial (418 aa).

The transit peptide at 1 to 40 directs the protein to the mitochondrion; sequence MAAPAKGMWCSLGSLLRVVQTRDLNARRWVRALRRSPVRV. A disordered region spans residues 41 to 90; sequence LSPSGQVEERKRAPDQQPRKAVPKASSQGQRQKQPLETSPSQTPHTWEEA. Over residues 47-58 the composition is skewed to basic and acidic residues; it reads VEERKRAPDQQP. The span at 65–85 shows a compositional bias: polar residues; it reads ASSQGQRQKQPLETSPSQTPH. Residues Gly-354, Ile-378, and Leu-387 each contribute to the S-adenosyl-L-methionine site.

It belongs to the class IV-like SAM-binding methyltransferase superfamily. RNA methyltransferase TrmH family.

It localises to the mitochondrion. The enzyme catalyses guanosine(1370) in 16S rRNA + S-adenosyl-L-methionine = 2'-O-methylguanosine(1370) in 16S rRNA + S-adenosyl-L-homocysteine + H(+). In terms of biological role, S-adenosyl-L-methionine-dependent 2'-O-ribose methyltransferase that catalyzes the formation of 2'-O-methylguanosine at position 1370 (Gm1370) in the 16S mitochondrial large subunit ribosomal RNA (mtLSU rRNA), a conserved modification in the peptidyl transferase domain of the mtLSU rRNA. Also required for formation of 2'-O-methyluridine at position 1369 (Um1369) mediated by MRM2. The protein is rRNA methyltransferase 3, mitochondrial of Mus musculus (Mouse).